The primary structure comprises 40 residues: Large ribosomal subunit protein bL36 (40 aa).

It belongs to the bacterial ribosomal protein bL36 family.

This Corynebacterium jeikeium (strain K411) protein is Large ribosomal subunit protein bL36.